A 219-amino-acid polypeptide reads, in one-letter code: MFFKIPQVLTPEALEKITTTLTEAEFVDGKLTAGWYAKLVKENQQLAKATPTAQALEEQVRQALQSNALFQTAIRPKTVHTLLFSRYGPGMAYGRHTDNALMNGMRSDVSFTLFLNEPSDYEGGELVIEGADSEQSYKLPAGTAIAYPSTSLHRVNVVTKGTRLVAVGWVQSWIRDAQKREIVFDLDVSRRSLFAQSGKTTEFDLLSKSVANLLRLWSE.

The Fe2OG dioxygenase domain maps to 78–172; the sequence is TVHTLLFSRY…RLVAVGWVQS (95 aa). Positions 96, 98, and 153 each coordinate Fe cation. Arg163 contacts 2-oxoglutarate.

It depends on Fe(2+) as a cofactor. L-ascorbate is required as a cofactor.

This chain is PKHD-type hydroxylase SYNPCC7002_A2658, found in Picosynechococcus sp. (strain ATCC 27264 / PCC 7002 / PR-6) (Agmenellum quadruplicatum).